The sequence spans 471 residues: Putative multidrug resistance protein MdtD (471 aa).

Residues 1-11 (MTDLPDNTRWQ) are Periplasmic-facing. A helical membrane pass occupies residues 12–32 (LWIVAFGFFMQSLDTTIVNTA). At 33–48 (LPSMAQSLGESPLHMH) the chain is on the cytoplasmic side. The chain crosses the membrane as a helical span at residues 49 to 69 (MVIVSYVLTVAVMLPASGWLA). Residues 70–76 (DKVGVRN) lie on the Periplasmic side of the membrane. Residues 77–97 (IFFTAIVLFTLGSLFCALSGT) traverse the membrane as a helical segment. The Cytoplasmic segment spans residues 98–101 (LNEL). Residues 102–124 (LLARALQGVGGAMMVPVGRLTVM) form a helical membrane-spanning segment. Residues 125-137 (KIVPREQYMAAMT) lie on the Periplasmic side of the membrane. Residues 138–158 (FVTLPGQVGPLLGPALGGLLV) form a helical membrane-spanning segment. Over 159–164 (EYASWH) the chain is Cytoplasmic. Residues 165–185 (WIFLINIPVGIIGAIATLMLM) form a helical membrane-spanning segment. Residues 186 to 196 (PNYTMQTRRFD) are Periplasmic-facing. A helical membrane pass occupies residues 197-217 (LSGFLLLAIGMAVLTLALDGS). The Cytoplasmic portion of the chain corresponds to 218 to 224 (KGTGLSP). A helical membrane pass occupies residues 225 to 245 (LAITGLVAVGVVALVLYLLHA). The Periplasmic portion of the chain corresponds to 246-262 (RNNNRALFSLKLFRTRT). The chain crosses the membrane as a helical span at residues 263 to 283 (FSLGLAGSFAGRIGSGMLPFM). Residues 284-285 (TP) lie on the Cytoplasmic side of the membrane. A helical membrane pass occupies residues 286 to 306 (VFLQIGLGFSPFHAGLMMIPM). Residues 307 to 341 (VLGSMGMKRIVVQVVNRFGYRRVLVATTLGLSLVT) are Periplasmic-facing. The helical transmembrane segment at 342–362 (LLFMTTALLGWYYVLPFVLFL) threads the bilayer. At 363 to 395 (QGMVNSTRFSSMNTLTLKDLPDNLASSGNSLLS) the chain is on the cytoplasmic side. A helical transmembrane segment spans residues 396 to 416 (MIMQLSMSIGVTIAGLLLGLF). Residues 417 to 430 (GSQHVSVDSGTTQT) lie on the Periplasmic side of the membrane. The chain crosses the membrane as a helical span at residues 431 to 451 (VFMYTWLSMAFIIALPAFIFA). Topologically, residues 452–471 (RVPNDTHQNVAISRRKRSAQ) are cytoplasmic.

The protein belongs to the major facilitator superfamily. TCR/Tet family.

It is found in the cell inner membrane. This Escherichia coli O17:K52:H18 (strain UMN026 / ExPEC) protein is Putative multidrug resistance protein MdtD.